The sequence spans 425 residues: Glutamyl-tRNA reductase (425 aa).

Substrate contacts are provided by residues 49 to 52 (TCNR), S106, 111 to 113 (EPQ), and Q117. The active-site Nucleophile is the C50. 186–191 (GAGETI) provides a ligand contact to NADP(+).

This sequence belongs to the glutamyl-tRNA reductase family. In terms of assembly, homodimer.

It carries out the reaction (S)-4-amino-5-oxopentanoate + tRNA(Glu) + NADP(+) = L-glutamyl-tRNA(Glu) + NADPH + H(+). Its pathway is porphyrin-containing compound metabolism; protoporphyrin-IX biosynthesis; 5-aminolevulinate from L-glutamyl-tRNA(Glu): step 1/2. Catalyzes the NADPH-dependent reduction of glutamyl-tRNA(Glu) to glutamate 1-semialdehyde (GSA). This is Glutamyl-tRNA reductase from Saccharophagus degradans (strain 2-40 / ATCC 43961 / DSM 17024).